A 329-amino-acid chain; its full sequence is Glycerol-3-phosphate dehydrogenase [NAD(P)+] (329 aa).

Positions 14, 34, and 108 each coordinate NADPH. Residues Lys-108, Gly-137, and Ser-139 each coordinate sn-glycerol 3-phosphate. Ala-141 provides a ligand contact to NADPH. The sn-glycerol 3-phosphate site is built by Lys-192, Asp-245, Ser-255, Arg-256, and Asn-257. Lys-192 serves as the catalytic Proton acceptor. Residue Arg-256 coordinates NADPH. NADPH-binding residues include Ile-280 and Glu-282.

The protein belongs to the NAD-dependent glycerol-3-phosphate dehydrogenase family.

The protein resides in the cytoplasm. It carries out the reaction sn-glycerol 3-phosphate + NAD(+) = dihydroxyacetone phosphate + NADH + H(+). The enzyme catalyses sn-glycerol 3-phosphate + NADP(+) = dihydroxyacetone phosphate + NADPH + H(+). It functions in the pathway membrane lipid metabolism; glycerophospholipid metabolism. In terms of biological role, catalyzes the reduction of the glycolytic intermediate dihydroxyacetone phosphate (DHAP) to sn-glycerol 3-phosphate (G3P), the key precursor for phospholipid synthesis. The protein is Glycerol-3-phosphate dehydrogenase [NAD(P)+] of Wigglesworthia glossinidia brevipalpis.